The primary structure comprises 860 residues: Leucine--tRNA ligase (860 aa).

The 'HIGH' region motif lies at 42–52 (PYPSGRLHMGH). A 'KMSKS' region motif is present at residues 619–623 (KMSKS). Lys622 is an ATP binding site.

It belongs to the class-I aminoacyl-tRNA synthetase family.

It is found in the cytoplasm. The enzyme catalyses tRNA(Leu) + L-leucine + ATP = L-leucyl-tRNA(Leu) + AMP + diphosphate. The chain is Leucine--tRNA ligase from Citrobacter koseri (strain ATCC BAA-895 / CDC 4225-83 / SGSC4696).